The chain runs to 385 residues: Lysine 6-dehydrogenase (385 aa).

Belongs to the saccharopine dehydrogenase family. In terms of assembly, homohexamer.

It catalyses the reaction L-lysine + NAD(+) = L-1-piperideine-6-carboxylate + NH4(+) + NADH + 2 H(+). Its function is as follows. Catalyzes the oxidative deamination of L-lysine in the presence of NAD. Can also use (S)-(2-aminoethyl)-L-cysteine as a substrate, but more slowly. Can use both NAD and NADP but the preferred substrate is NAD. This is Lysine 6-dehydrogenase (lysDH) from Geobacillus stearothermophilus (Bacillus stearothermophilus).